The chain runs to 1576 residues: Proton channel OtopLc (1576 aa).

2 disordered regions span residues 1–602 (MDSS…SSPP) and 621–736 (QIGS…SSPV). Low complexity-rich tracts occupy residues 58-67 (SLAEEVLLLV) and 76-85 (LLGQPLPTLT). 4 stretches are compositionally biased toward acidic residues: residues 103 to 116 (DEGD…EPVP), 159 to 171 (DDGE…DAEE), 186 to 198 (SNPD…EEQE), and 206 to 216 (PKEEDEEEDDD). The span at 219–228 (TPPPPLPPLP) shows a compositional bias: pro residues. A compositionally biased stretch (polar residues) spans 229–241 (SNFSYVQGHNLGQ). N-linked (GlcNAc...) asparagine glycosylation is present at Asn-230. Residues 243 to 252 (TPPLTKSPSN) show a composition bias toward low complexity. The segment covering 253 to 264 (SPSPPVTPPPCP) has biased composition (pro residues). Asn-267 carries N-linked (GlcNAc...) asparagine glycosylation. Residues 316–341 (DQPEPEDQPPEPENEPEPEPEPEPEP) show a composition bias toward acidic residues. Residues 347 to 356 (AREDYSRSLD) are compositionally biased toward basic and acidic residues. Residues 362 to 376 (TTITTPPSNGYSASS) show a composition bias toward polar residues. Over residues 384 to 393 (HFAELDEDRG) the composition is skewed to basic and acidic residues. Over residues 402-419 (QEPEEEVEEEEEEEEEEL) the composition is skewed to acidic residues. Residues 420–433 (TKETDEISVDRESL) are compositionally biased toward basic and acidic residues. Over residues 434–457 (QDQGGDSISSPRPASILTGSISTS) the composition is skewed to polar residues. Over residues 465–507 (SPKPESRGPSRSGSQRSQLRSGSQQGSIAESRGGSRIGSRTGS) the composition is skewed to low complexity. Polar residues-rich tracts occupy residues 519–534 (PQAS…SQGQ) and 545–555 (KSGSQRMQSPQ). Positions 563-575 (MPSPPLMRSPPPE) are enriched in pro residues. A compositionally biased stretch (low complexity) spans 661 to 685 (AAAAPAVTTTAATTAVTSQPRSHFT). Residues 686–709 (SSHHHYHLPHQFQHPHHQNHHTHS) show a composition bias toward basic residues. The chain crosses the membrane as a helical span at residues 741–761 (LFMAGVAPPIAAGAGSLMAMP). The segment at 771-845 (GRVSARSGSQ…GSSSQPALSG (75 aa)) is disordered. Residues 776–799 (RSGSQHHVTIDESSLPSHKGNIQE) are compositionally biased toward polar residues. The span at 826–839 (DSSDPPSSPGGSSS) shows a compositional bias: low complexity. 2 helical membrane passes run 891 to 911 (ALAT…GIAF) and 931 to 951 (LYLY…LIWG). Over residues 962 to 973 (PSKSATKASGTD) the composition is skewed to polar residues. The disordered stretch occupies residues 962 to 1001 (PSKSATKASGTDSMDESDTDSNSVHHRLPPPIPVRRPSLL). 3 helical membrane passes run 1019-1039 (GAVA…GQYF), 1051-1071 (LLAL…YFIF), and 1084-1104 (IIAR…WLNV). Asn-1121 carries N-linked (GlcNAc...) asparagine glycosylation. The next 7 helical transmembrane spans lie at 1179 to 1199 (FLFP…YVMW), 1239 to 1259 (FVGI…FVLI), 1272 to 1292 (VTIC…VGMI), 1310 to 1330 (ILLV…VIAG), 1340 to 1360 (LVPI…MFIL), 1381 to 1401 (IVTF…LEKS), and 1412 to 1432 (FYGL…AIFY). Asn-1479 carries an N-linked (GlcNAc...) asparagine glycan. The segment at 1498 to 1549 (EEVDSGESNSAEDAGAGAGSGGSRGSGGGAGAAEAGEAGEEGQQGGDSSCGL) is disordered. The span at 1503 to 1512 (GESNSAEDAG) shows a compositional bias: low complexity. Positions 1513 to 1528 (AGAGSGGSRGSGGGAG) are enriched in gly residues.

This sequence belongs to the otopetrin family.

It is found in the cell membrane. In terms of biological role, proton-selective channel that specifically transports protons into cells. Proton-selective channel activity is probably required in cell types that use changes in intracellular pH for cell signaling or to regulate biochemical or developmental processes. The sequence is that of Proton channel OtopLc from Drosophila melanogaster (Fruit fly).